The following is a 93-amino-acid chain: YcgL domain-containing protein VV1058 (93 aa).

The 84-residue stretch at 1–84 folds into the YcgL domain; it reads MLCSIYKSSK…PPENLLQQHK (84 aa). Residues 74–93 are disordered; it reads PPPENLLQQHKERKAQQKND.

The protein is YcgL domain-containing protein VV1058 of Vibrio vulnificus (strain YJ016).